Consider the following 535-residue polypeptide: MTASSKPSASASDSSADGTSAHDKILIVDFGSQVTQLIARRVREEGVYSEIVPFQKAEAAFLAMKPKAVILSGGPASVLDRAAPAAPMAIFTAGVPVLGICYGEQTMAQQLGGTVEAGHHREFGRAAIEVIDACALFDGVWEKGGTYDVWMSHGDRVTKLPDGFRAVAKAPGSPIAVIADDARRFYAMQFHPEVVHTPDGAKLIRNFVRKVAGLTGDWTMRAFREEAVEKIRTQVGKGRVICGLSGGVDSSVAAILIHEAIGDQLTCVFVDHGMLRKDEGKTVVDLFRHHYNIPLIHVDASKKFLSELAGVTDPEAKRKTIGRLFIDVFEAEAKKIGGADFLAQGTLYPDVIESVSFTGGPSVTIKSHHNVGGLPDRMNMKLVEPLRELFKDEVRALGRELGLPEIFVGRHPFPGPGLAIRCPGEITNEKLDILREADAVYIDEIRKAGLYDNIWQAFAVLLPVKTVGVMGDSRTYDYVVGLRAVTSTDGMTADFYPFDAQFLGSTSTRIINEVKGVNRVVYDVTSKPPGTIEWE.

One can recognise a Glutamine amidotransferase type-1 domain in the interval 24–217; it reads KILIVDFGSQ…VRKVAGLTGD (194 aa). C101 functions as the Nucleophile in the catalytic mechanism. Active-site residues include H191 and E193. Residues 218–410 enclose the GMPS ATP-PPase domain; that stretch reads WTMRAFREEA…LGLPEIFVGR (193 aa). Position 245–251 (245–251) interacts with ATP; the sequence is SGGVDSS.

Homodimer.

The enzyme catalyses XMP + L-glutamine + ATP + H2O = GMP + L-glutamate + AMP + diphosphate + 2 H(+). It participates in purine metabolism; GMP biosynthesis; GMP from XMP (L-Gln route): step 1/1. Catalyzes the synthesis of GMP from XMP. The polypeptide is GMP synthase [glutamine-hydrolyzing] (Nitrobacter winogradskyi (strain ATCC 25391 / DSM 10237 / CIP 104748 / NCIMB 11846 / Nb-255)).